The sequence spans 799 residues: Zinc finger X-linked protein ZXDA (799 aa).

The interval 1-89 (MEIPKLLPAR…QPSGGGDDFF (89 aa)) is disordered. Over residues 13 to 26 (LQGGGGGGIPAGGG) the composition is skewed to gly residues. 10 consecutive C2H2-type zinc fingers follow at residues 267 to 291 (YLCP…LLTH), 300 to 324 (FKCP…LQSH), 330 to 354 (FGCP…MKGH), 360 to 382 (FKCE…QRSH), 389 to 413 (YQCA…NRAH), 420 to 444 (FSCS…LRSH), 450 to 474 (FLCD…KRKH), 480 to 504 (FMCP…SITH), 510 to 534 (FVCP…SKKH), and 543 to 568 (SRCP…VKRH). The segment at 267–573 (YLCPEALCGQ…MVKRHKVGQD (307 aa)) is required for interaction with ZXDC. Positions 572 to 699 (QDLLAQLEAA…NMDEVSSVSV (128 aa)) are required for transcriptional activation.

Belongs to the ZXD family. Self-associates. Interacts with ZXDC and CIITA. As to expression, may be expressed in brain, heart, kidney, liver, lung, muscle and placenta.

The protein resides in the nucleus. In terms of biological role, cooperates with CIITA to promote transcription of MHC class I and MHC class II genes. The protein is Zinc finger X-linked protein ZXDA (ZXDA) of Homo sapiens (Human).